The chain runs to 467 residues: MAVEKTMDKIVALCKNRGFIFPGSEIYGGLANSWDYGPLGVEFKNNVKRAWWKKFVQESKYNVGLDSAILMNREVWVASGHVGGFSDPLMDCKECKARFRADKLVEDHMTANGAEVATADGWSNEELMDYITKNNIVCPKCGKLNYTDIRKFNLMFKTFQGITEDSKNEVYLRPETAQGIFVNFKSVQRTTRKKVPFGIAQIGKSFRNEITPGNFTFRTREFEQMELEFFCKPGTDLEWFNFWKDSCWNFLLNLGMKEENIRMRDHGEEELSFYSNATSDIEYLFPFGWGELWGIADRTDYDLNKHAEHSGQDMTYLDPTTNEKYVPYVIEPSLGADRVALAFLVEAYDEEELEGANGKVDVRTVMHLHPALAPFKAAILPLSKKLSEKADEVYAELSKHFNVDYDETGSIGKRYRRQDEIGTPFCITVDFDTLEDGCVTVRDRDNMEQQRVKIEDVRAIIEKSLEF.

Substrate is bound by residues arginine 100 and glutamate 175. ATP-binding positions include 207 to 209, 217 to 222, 291 to 292, and 335 to 338; these read RNE, FRTREF, EL, and GADR. 222–226 provides a ligand contact to substrate; sequence FEQME. Residue 331–335 participates in substrate binding; the sequence is EPSLG.

It belongs to the class-II aminoacyl-tRNA synthetase family. Homodimer.

Its subcellular location is the cytoplasm. The enzyme catalyses tRNA(Gly) + glycine + ATP = glycyl-tRNA(Gly) + AMP + diphosphate. Catalyzes the attachment of glycine to tRNA(Gly). The protein is Glycine--tRNA ligase of Clostridium perfringens (strain 13 / Type A).